The following is a 185-amino-acid chain: 16S rRNA aminocarboxypropyltransferase (185 aa).

Residues Thr-19, Ile-69, Leu-93, Tyr-108, and Thr-112 each contribute to the S-adenosyl-L-methionine site.

It belongs to the TDD superfamily. TSR3 family.

Its subcellular location is the cytoplasm. The enzyme catalyses an N(1)-methylpseudouridine in rRNA + S-adenosyl-L-methionine = N(1)-methyl-N(3)-[(3S)-3-amino-3-carboxypropyl]pseudouridine in rRNA + S-methyl-5'-thioadenosine + H(+). Aminocarboxypropyltransferase that catalyzes the aminocarboxypropyl transfer on pseudouridine corresponding to position 914 in M.jannaschii 16S rRNA. It constitutes the last step in biosynthesis of the hypermodified N1-methyl-N3-(3-amino-3-carboxypropyl) pseudouridine (m1acp3-Psi). The chain is 16S rRNA aminocarboxypropyltransferase from Vulcanisaeta distributa (strain DSM 14429 / JCM 11212 / NBRC 100878 / IC-017).